Consider the following 230-residue polypeptide: Large ribosomal subunit protein uL1 (230 aa).

It belongs to the universal ribosomal protein uL1 family. In terms of assembly, part of the 50S ribosomal subunit.

Its function is as follows. Binds directly to 23S rRNA. The L1 stalk is quite mobile in the ribosome, and is involved in E site tRNA release. Protein L1 is also a translational repressor protein, it controls the translation of the L11 operon by binding to its mRNA. The protein is Large ribosomal subunit protein uL1 of Bifidobacterium longum subsp. infantis (strain ATCC 15697 / DSM 20088 / JCM 1222 / NCTC 11817 / S12).